Consider the following 294-residue polypeptide: PAK4-inhibitor INKA2 (294 aa).

3 disordered regions span residues 50–143 (ISGG…STLM), 170–198 (PELE…RELG), and 223–290 (LKEK…DINT). Residues 85 to 99 (SPSNQASLGSTSSGK) show a composition bias toward polar residues. The inka box stretch occupies residues 134–177 (EPDDWTSTLMSRGRNRQPLVLGDNVFADLVGNWLDLPELEKGGE). The segment covering 171 to 198 (ELEKGGEKGETGEAGEPKGGRGQPRELG) has biased composition (basic and acidic residues). Residues 241 to 253 (RSQKVKKRSHSKG) show a composition bias toward basic residues.

This sequence belongs to the INKA family. In terms of assembly, interacts with PAK4.

It is found in the nucleus. In terms of biological role, inhibitor of the serine/threonine-protein kinase PAK4. Acts by binding PAK4 in a substrate-like manner, inhibiting the protein kinase activity. In Bos taurus (Bovine), this protein is PAK4-inhibitor INKA2.